The following is a 314-amino-acid chain: MTRTRSGSLAAGGLNWASLPLKLFAGGNAKFWDPADIDFTRDRADWEKLSDDERDYATRLCTQFIAGEEAVTEDIQPFMSAMRAEGRLADEMYLTQFAFEEAKHTQVFRMWLDAVGISEDLHRYLDDLPAYRQIFYAELPECLNALSADPSPAAQVRASVTYNHIVEGMLALTGYYAWHKICVERAILPGMQELVRRIGDDERRHMAWGTFTCRRHVAADDANWTVFETRMNELIPLALRLIEEGFALYGDQPPFDLSKDDFLQYSTDKGMRRFGTISNARGRPVAEIDVDYSPAQLEDTFADEDRRTLAAASA.

Glu-68, Glu-101, and His-104 together coordinate Mn(2+). A cross-link (3-(O4'-tyrosyl)-valine (Val-Tyr)) is located at residues 71-162 (VTEDIQPFMS…AAQVRASVTY (92 aa)). Glu-101 contributes to the Fe cation binding site. Residues Glu-167, Glu-202, and His-205 each coordinate Fe cation.

Belongs to the ribonucleoside diphosphate reductase small chain family. R2-like ligand binding oxidase subfamily. As to quaternary structure, homodimer. The cofactor is Fe cation. Mn(2+) serves as cofactor.

Its function is as follows. Probable oxidase that might be involved in lipid metabolism. This Mycobacterium bovis (strain ATCC BAA-935 / AF2122/97) protein is R2-like ligand binding oxidase.